A 69-amino-acid polypeptide reads, in one-letter code: Cytochrome c oxidase subunit 8A, mitochondrial (69 aa).

The transit peptide at 1–25 directs the protein to the mitochondrion; that stretch reads MSVLTPLLLRSLTGSARRLMVPRAQ. The short motif at 2-19 is the SIFI-degron element; the sequence is SVLTPLLLRSLTGSARRL. At 26 to 36 the chain is on the mitochondrial matrix side; it reads VHSKPAREQLG. Residues 37–60 form a helical membrane-spanning segment; the sequence is VLDITIGLTSCFVCCLLPAGWVLS. At 61–69 the chain is on the mitochondrial intermembrane side; that stretch reads HLESYKKRE.

Belongs to the cytochrome c oxidase VIII family. Component of the cytochrome c oxidase (complex IV, CIV), a multisubunit enzyme composed of 14 subunits. The complex is composed of a catalytic core of 3 subunits MT-CO1, MT-CO2 and MT-CO3, encoded in the mitochondrial DNA, and 11 supernumerary subunits COX4I, COX5A, COX5B, COX6A, COX6B, COX6C, COX7A, COX7B, COX7C, COX8 and NDUFA4, which are encoded in the nuclear genome. The complex exists as a monomer or a dimer and forms supercomplexes (SCs) in the inner mitochondrial membrane with NADH-ubiquinone oxidoreductase (complex I, CI) and ubiquinol-cytochrome c oxidoreductase (cytochrome b-c1 complex, complex III, CIII), resulting in different assemblies (supercomplex SCI(1)III(2)IV(1) and megacomplex MCI(2)III(2)IV(2)). In terms of processing, in response to mitochondrial stress, the precursor protein is ubiquitinated by the SIFI complex in the cytoplasm before mitochondrial import, leading to its degradation. Within the SIFI complex, UBR4 initiates ubiquitin chain that are further elongated or branched by KCMF1.

The protein localises to the mitochondrion inner membrane. Its pathway is energy metabolism; oxidative phosphorylation. Its function is as follows. Component of the cytochrome c oxidase, the last enzyme in the mitochondrial electron transport chain which drives oxidative phosphorylation. The respiratory chain contains 3 multisubunit complexes succinate dehydrogenase (complex II, CII), ubiquinol-cytochrome c oxidoreductase (cytochrome b-c1 complex, complex III, CIII) and cytochrome c oxidase (complex IV, CIV), that cooperate to transfer electrons derived from NADH and succinate to molecular oxygen, creating an electrochemical gradient over the inner membrane that drives transmembrane transport and the ATP synthase. Cytochrome c oxidase is the component of the respiratory chain that catalyzes the reduction of oxygen to water. Electrons originating from reduced cytochrome c in the intermembrane space (IMS) are transferred via the dinuclear copper A center (CU(A)) of subunit 2 and heme A of subunit 1 to the active site in subunit 1, a binuclear center (BNC) formed by heme A3 and copper B (CU(B)). The BNC reduces molecular oxygen to 2 water molecules using 4 electrons from cytochrome c in the IMS and 4 protons from the mitochondrial matrix. This Mus musculus (Mouse) protein is Cytochrome c oxidase subunit 8A, mitochondrial (Cox8a).